The following is a 112-amino-acid chain: T cell receptor alpha variable 9-2 (112 aa).

A signal peptide spans 1–20 (MNYSPGLVSLILLLLGRTRG). The Ig-like domain maps to 21–112 (DSVTQMEGPV…DSAVYFCALS (92 aa)). Asn41 is a glycosylation site (N-linked (GlcNAc...) asparagine). The cysteines at positions 42 and 109 are disulfide-linked.

Alpha-beta TR is a heterodimer composed of an alpha and beta chain; disulfide-linked. The alpha-beta TR is associated with the transmembrane signaling CD3 coreceptor proteins to form the TR-CD3 (TcR or TCR). The assembly of alpha-beta TR heterodimers with CD3 occurs in the endoplasmic reticulum where a single alpha-beta TR heterodimer associates with one CD3D-CD3E heterodimer, one CD3G-CD3E heterodimer and one CD247 homodimer forming a stable octameric structure. CD3D-CD3E and CD3G-CD3E heterodimers preferentially associate with TR alpha and TR beta chains, respectively. The association of the CD247 homodimer is the last step of TcR assembly in the endoplasmic reticulum and is required for transport to the cell surface.

It is found in the cell membrane. V region of the variable domain of T cell receptor (TR) alpha chain that participates in the antigen recognition. Alpha-beta T cell receptors are antigen specific receptors which are essential to the immune response and are present on the cell surface of T lymphocytes. Recognize peptide-major histocompatibility (MH) (pMH) complexes that are displayed by antigen presenting cells (APC), a prerequisite for efficient T cell adaptive immunity against pathogens. Binding of alpha-beta TR to pMH complex initiates TR-CD3 clustering on the cell surface and intracellular activation of LCK that phosphorylates the ITAM motifs of CD3G, CD3D, CD3E and CD247 enabling the recruitment of ZAP70. In turn ZAP70 phosphorylates LAT, which recruits numerous signaling molecules to form the LAT signalosome. The LAT signalosome propagates signal branching to three major signaling pathways, the calcium, the mitogen-activated protein kinase (MAPK) kinase and the nuclear factor NF-kappa-B (NF-kB) pathways, leading to the mobilization of transcription factors that are critical for gene expression and essential for T cell growth and differentiation. The T cell repertoire is generated in the thymus, by V-(D)-J rearrangement. This repertoire is then shaped by intrathymic selection events to generate a peripheral T cell pool of self-MH restricted, non-autoaggressive T cells. Post-thymic interaction of alpha-beta TR with the pMH complexes shapes TR structural and functional avidity. The protein is T cell receptor alpha variable 9-2 of Homo sapiens (Human).